The chain runs to 258 residues: UPF0246 protein YaaA (258 aa).

Belongs to the UPF0246 family.

This is UPF0246 protein YaaA from Escherichia coli O157:H7.